The following is a 457-amino-acid chain: 4-hydroxybenzoate transporter PcaK (457 aa).

Over M1–Q34 the chain is Cytoplasmic. A helical membrane pass occupies residues W35–M55. Topologically, residues G56–Q72 are periplasmic. A helical membrane pass occupies residues L73–P93. Topologically, residues T94 to K101 are cytoplasmic. Residues I102 to T122 traverse the membrane as a helical segment. At N123 to V128 the chain is on the periplasmic side. A helical transmembrane segment spans residues I129 to F149. Residues S150–G168 are Cytoplasmic-facing. The helical transmembrane segment at Y169–W189 threads the bilayer. The Periplasmic portion of the chain corresponds to H190 to S191. Residues L192–P212 traverse the membrane as a helical segment. Over E213 to T274 the chain is Cytoplasmic. Residues V275–L295 traverse the membrane as a helical segment. The Periplasmic portion of the chain corresponds to P296–A310. The chain crosses the membrane as a helical span at residues F311–M331. Residues D332–R338 lie on the Cytoplasmic side of the membrane. A helical transmembrane segment spans residues I339–S359. Topologically, residues N360 to L363 are periplasmic. A helical membrane pass occupies residues L364–V384. Residues L385 to A400 are Cytoplasmic-facing. Residues W401–L421 form a helical membrane-spanning segment. Over G422–S426 the chain is Periplasmic. Residues F427–V447 form a helical membrane-spanning segment. Over K448–T457 the chain is Cytoplasmic.

Belongs to the major facilitator superfamily. Aromatic acid:H(+) symporter (AAHS) (TC 2.A.1.15) family. As to quaternary structure, homotrimer.

It is found in the cell inner membrane. In terms of biological role, uptake of 4-hydroxybenzoate (4-HB). Can also transport a variety of aromatic acids with hydroxyl substitutions at the 2-, 3- and 4-positions, such as salicylate, 2,4-dihydroxybenzoate, protocatechuate, 3-hydroxybenzoate, vanillate and gentisate. In Acinetobacter baylyi (strain ATCC 33305 / BD413 / ADP1), this protein is 4-hydroxybenzoate transporter PcaK.